A 343-amino-acid chain; its full sequence is Probable magnesium transporter NIPA4 (343 aa).

Over 1–18 the chain is Extracellular; that stretch reads MAESSGSWRDSYKGMSSD. The helical transmembrane segment at 19–39 threads the bilayer; it reads NIKGLVLALSSSLFIGASFIV. At 40-66 the chain is on the cytoplasmic side; it reads KKKGLKKAASTGTRAGVGGYSYLYEPL. The chain crosses the membrane as a helical span at residues 67 to 87; sequence WWIGMTTMLLGEIANFAAYAF. Residues 88–90 are Extracellular-facing; sequence APA. The chain crosses the membrane as a helical span at residues 91-111; the sequence is ILVTPLGAVSIIISAVLAHII. The Cytoplasmic segment spans residues 112–115; the sequence is LREK. The chain crosses the membrane as a helical span at residues 116-136; sequence LHIFGILGCALCVVGSTTIVL. The Extracellular portion of the chain corresponds to 137–157; that stretch reads HAPQEREIDSVIEVWNLATEP. Residues 158-178 form a helical membrane-spanning segment; that stretch reads AFMFYASLVIGAAVFLIIRFV. Topologically, residues 179–189 are cytoplasmic; it reads PQYGQTNVMVY. The helical transmembrane segment at 190–210 threads the bilayer; that stretch reads IGICSLVGSLSVMSVKALGIA. Residues 211–220 lie on the Extracellular side of the membrane; the sequence is LKLTFSGTNQ. A helical transmembrane segment spans residues 221 to 241; sequence LFYPQTWIFTLVVLTCVVTQL. The Cytoplasmic portion of the chain corresponds to 242 to 254; sequence NYLNKALDTFNTA. A helical membrane pass occupies residues 255–275; the sequence is IVSPIYYVMFTSLTILASVIM. The Extracellular segment spans residues 276 to 283; sequence FKDWDRQN. The helical transmembrane segment at 284–304 threads the bilayer; the sequence is GTQIVTEICGFVTILSGTFLL. Over 305–343 the chain is Cytoplasmic; it reads HRTKDMVEGSSVILPLRISKHINEEEGIPLRRQESLRSP.

It belongs to the NIPA (TC 2.A.7) family. Homodimer.

It localises to the cell membrane. The protein localises to the early endosome. Acts as a Mg(2+) transporter. Can also transport other divalent cations such as Fe(2+), Sr(2+), Ba(2+), Mn(2+) and Co(2+) but to a much less extent than Mg(2+). The chain is Probable magnesium transporter NIPA4 from Arabidopsis thaliana (Mouse-ear cress).